We begin with the raw amino-acid sequence, 2999 residues long: TPR and ankyrin repeat-containing protein 1 (2999 aa).

Positions Met1 to Cys87 are disordered. Residues Arg19–Glu36 show a composition bias toward low complexity. TPR repeat units lie at residues Ala144–Tyr177 and Lys179–Ser211. 6 ANK repeats span residues Glu297–Thr327, Ile328–Glu361, Ala369–Leu405, Ser538–Ser567, Glu572–Phe593, and Asn621–Leu654. 4 disordered regions span residues Arg684–Gly722, Met773–Gln831, Leu1151–Pro1211, and Trp1318–Asp1344. Polar residues-rich tracts occupy residues Ser699–Lys717 and Thr801–Val815. The span at Leu1151–Glu1164 shows a compositional bias: basic and acidic residues. Residues Trp1318–Ala1327 are compositionally biased toward acidic residues. TPR repeat units lie at residues Pro1772–Lys1805 and Leu1866–Leu1899.

As to expression, expressed only in the brain. Detected in the hippocampus, hypothalamus and cingulate gyrus.

This is TPR and ankyrin repeat-containing protein 1 (Trank1) from Mus musculus (Mouse).